Reading from the N-terminus, the 426-residue chain is Glutamate-1-semialdehyde 2,1-aminomutase (426 aa).

Lys265 carries the N6-(pyridoxal phosphate)lysine modification.

It belongs to the class-III pyridoxal-phosphate-dependent aminotransferase family. HemL subfamily. In terms of assembly, homodimer. The cofactor is pyridoxal 5'-phosphate.

The protein localises to the cytoplasm. It catalyses the reaction (S)-4-amino-5-oxopentanoate = 5-aminolevulinate. The protein operates within porphyrin-containing compound metabolism; protoporphyrin-IX biosynthesis; 5-aminolevulinate from L-glutamyl-tRNA(Glu): step 2/2. The protein is Glutamate-1-semialdehyde 2,1-aminomutase of Escherichia fergusonii (strain ATCC 35469 / DSM 13698 / CCUG 18766 / IAM 14443 / JCM 21226 / LMG 7866 / NBRC 102419 / NCTC 12128 / CDC 0568-73).